We begin with the raw amino-acid sequence, 127 residues long: Large ribosomal subunit protein bL19 (127 aa).

It belongs to the bacterial ribosomal protein bL19 family.

This protein is located at the 30S-50S ribosomal subunit interface and may play a role in the structure and function of the aminoacyl-tRNA binding site. The chain is Large ribosomal subunit protein bL19 from Ruegeria pomeroyi (strain ATCC 700808 / DSM 15171 / DSS-3) (Silicibacter pomeroyi).